The primary structure comprises 209 residues: GTP cyclohydrolase 1 (209 aa).

Residues C89, H92, and C163 each coordinate Zn(2+).

It belongs to the GTP cyclohydrolase I family. As to quaternary structure, toroid-shaped homodecamer, composed of two pentamers of five dimers.

It carries out the reaction GTP + H2O = 7,8-dihydroneopterin 3'-triphosphate + formate + H(+). Its pathway is cofactor biosynthesis; 7,8-dihydroneopterin triphosphate biosynthesis; 7,8-dihydroneopterin triphosphate from GTP: step 1/1. The polypeptide is GTP cyclohydrolase 1 (Sulfolobus acidocaldarius (strain ATCC 33909 / DSM 639 / JCM 8929 / NBRC 15157 / NCIMB 11770)).